The chain runs to 801 residues: MVGSSDGDQSDDSSHFERGVDHIYEAFICPLTKEVMHDPVTLENGRTFEREAIEKWFKECRDSGRPPSCPLTSQELTSTDVSASIALRNTIEEWRSRNDAAKLDIARQSLFLGNAETDILQALMHVRQICRTIRSNRHGVRNSQLIHMIIDMLKSTSHRVRYKALQTLQVVVEGDDESKAIVAEGDTVRTLVKFLSHEPSKGREAAVSLLFELSKSEALCEKIGSIHGALILLVGLTSSNSENVSIVEKADRTLENMERSEEIVRQMASYGRLQPLLGKLLEGSPETKLSMASFLGELPLNNDVKVLVAQTVGSSLVDLMRSGDMPQREAALKALNKISSFEGSAKVLISKGILPPLIKDLFYVGPNNLPIRLKEVSATILANIVNIGYDFDKATLVSENRVENLLHLISNTGPAIQCKLLEVLVGLTSCPKTVPKVVYAIKTSGAIISLVQFIEVRENDDLRLASIKLLHNLSPFMSEELAKALCGTAGQLGSLVAIISEKTPITEEQAAAAGLLAELPDRDLGLTQEMLEVGAFEKIISKVFGIRQGDIKGMRFVNPFLEGLVRILARITFVFNKEARAINFCREHDVASLFLHLLQSNGQDNIQMVSAMALENLSLESIKLTRMPDPPPVNYCGSIFSCVRKPHVVNGLCKIHQGICSLRETFCLVEGGAVEKLVALLDHENVKVVEAALAALSSLLEDGLDVEKGVKILDEADGIRHILNVLRENRTERLTRRAVWMVERILRIEDIAREVAEEQSLSAALVDAFQNADFRTRQIAENALKHIDKIPNFSSIFPNIA.

A U-box domain is found at 22 to 101; that stretch reads HIYEAFICPL…EEWRSRNDAA (80 aa). 9 ARM repeats span residues 134-173, 176-215, 218-259, 261-300, 301-340, 342-386, 390-429, 435-475, and 480-521; these read RSNR…VVVE, DESK…ELSK, ALCE…NMER, EEIV…ELPL, NNDV…KISS, EGSA…NIVN, DFDK…GLTS, PKVV…NLSP, and ELAK…ELPD.

Interacts with AAO3. Binds to SD129. Expressed in leaves, root vasculature and guard cells.

It catalyses the reaction S-ubiquitinyl-[E2 ubiquitin-conjugating enzyme]-L-cysteine + [acceptor protein]-L-lysine = [E2 ubiquitin-conjugating enzyme]-L-cysteine + N(6)-ubiquitinyl-[acceptor protein]-L-lysine.. The protein operates within protein modification; protein ubiquitination. Its function is as follows. Functions as an E3 ubiquitin-protein ligase. Prevents premature senescence probably by targeting proteins involved in this process for degradation. Promotes the degradation of AAO3 and thus represses abscisic acid (ABA) biosynthesis. The polypeptide is U-box domain-containing protein 44 (PUB44) (Arabidopsis thaliana (Mouse-ear cress)).